The chain runs to 313 residues: 4-hydroxy-3-methylbut-2-enyl diphosphate reductase (313 aa).

Cys-12 serves as a coordination point for [4Fe-4S] cluster. His-41 and His-74 together coordinate (2E)-4-hydroxy-3-methylbut-2-enyl diphosphate. Residues His-41 and His-74 each contribute to the dimethylallyl diphosphate site. Isopentenyl diphosphate is bound by residues His-41 and His-74. Cys-96 lines the [4Fe-4S] cluster pocket. His-124 lines the (2E)-4-hydroxy-3-methylbut-2-enyl diphosphate pocket. Position 124 (His-124) interacts with dimethylallyl diphosphate. His-124 contacts isopentenyl diphosphate. The active-site Proton donor is Glu-126. Residue Thr-167 coordinates (2E)-4-hydroxy-3-methylbut-2-enyl diphosphate. Cys-197 is a binding site for [4Fe-4S] cluster. (2E)-4-hydroxy-3-methylbut-2-enyl diphosphate-binding residues include Ser-225, Ser-226, Asn-227, and Ser-269. Residues Ser-225, Ser-226, Asn-227, and Ser-269 each contribute to the dimethylallyl diphosphate site. Residues Ser-225, Ser-226, Asn-227, and Ser-269 each contribute to the isopentenyl diphosphate site.

It belongs to the IspH family. The cofactor is [4Fe-4S] cluster.

It carries out the reaction isopentenyl diphosphate + 2 oxidized [2Fe-2S]-[ferredoxin] + H2O = (2E)-4-hydroxy-3-methylbut-2-enyl diphosphate + 2 reduced [2Fe-2S]-[ferredoxin] + 2 H(+). The catalysed reaction is dimethylallyl diphosphate + 2 oxidized [2Fe-2S]-[ferredoxin] + H2O = (2E)-4-hydroxy-3-methylbut-2-enyl diphosphate + 2 reduced [2Fe-2S]-[ferredoxin] + 2 H(+). It participates in isoprenoid biosynthesis; dimethylallyl diphosphate biosynthesis; dimethylallyl diphosphate from (2E)-4-hydroxy-3-methylbutenyl diphosphate: step 1/1. It functions in the pathway isoprenoid biosynthesis; isopentenyl diphosphate biosynthesis via DXP pathway; isopentenyl diphosphate from 1-deoxy-D-xylulose 5-phosphate: step 6/6. Its function is as follows. Catalyzes the conversion of 1-hydroxy-2-methyl-2-(E)-butenyl 4-diphosphate (HMBPP) into a mixture of isopentenyl diphosphate (IPP) and dimethylallyl diphosphate (DMAPP). Acts in the terminal step of the DOXP/MEP pathway for isoprenoid precursor biosynthesis. The sequence is that of 4-hydroxy-3-methylbut-2-enyl diphosphate reductase from Methylococcus capsulatus (strain ATCC 33009 / NCIMB 11132 / Bath).